Here is a 1492-residue protein sequence, read N- to C-terminus: DNA-directed RNA polymerase subunit beta' (1492 aa).

The Zn(2+) site is built by Cys67, Cys69, Cys82, and Cys85. Residues Asp499, Asp501, and Asp503 each coordinate Mg(2+). The Zn(2+) site is built by Cys867, Cys943, Cys950, and Cys953.

This sequence belongs to the RNA polymerase beta' chain family. In terms of assembly, the RNAP catalytic core consists of 2 alpha, 1 beta, 1 beta' and 1 omega subunit. When a sigma factor is associated with the core the holoenzyme is formed, which can initiate transcription. It depends on Mg(2+) as a cofactor. Zn(2+) is required as a cofactor.

The enzyme catalyses RNA(n) + a ribonucleoside 5'-triphosphate = RNA(n+1) + diphosphate. DNA-dependent RNA polymerase catalyzes the transcription of DNA into RNA using the four ribonucleoside triphosphates as substrates. The protein is DNA-directed RNA polymerase subunit beta' of Chlorobium phaeobacteroides (strain DSM 266 / SMG 266 / 2430).